The primary structure comprises 249 residues: Kallikrein-7 (249 aa).

An N-terminal signal peptide occupies residues 1–21 (MGVWLLSLITVLLSLALETAG). Residues 22 to 25 (QGER) constitute a propeptide, activation peptide. A serine protease region spans residues 26–246 (IIDGYKCKEG…YKRWVMETMK (221 aa)). 6 cysteine pairs are disulfide-bonded: cysteine 32–cysteine 161, cysteine 51–cysteine 67, cysteine 133–cysteine 235, cysteine 140–cysteine 207, cysteine 172–cysteine 186, and cysteine 197–cysteine 222. Catalysis depends on charge relay system residues histidine 66 and aspartate 108. Catalysis depends on serine 201, which acts as the Charge relay system.

It belongs to the peptidase S1 family. Kallikrein subfamily. Expressed in skin and, at lower levels, in lung, kidney, brain, heart and spleen. In skin, expressed in high suprabasal keratinocytes and in the luminal parts of hair follicles. Not detected in liver and skeletal muscle.

It localises to the secreted. The enzyme catalyses Cleavage of proteins with aromatic side chains in the P1 position.. Its activity is regulated as follows. Inhibited by Zn2+ and Cu2+ at low micromolar concentrations. Inhibited by SERPINA12. Functionally, may catalyze the degradation of intercellular cohesive structures in the cornified layer of the skin in the continuous shedding of cells from the skin surface. Specific for amino acid residues with aromatic side chains in the P1 position. Cleaves insulin A chain at '14-Tyr-|-Gln-15' and insulin B chain at '6-Leu-|-Cys-7', '16-Tyr-|-Leu-17', '25-Phe-|-Tyr-26' and '26-Tyr-|-Thr-27'. Could play a role in the activation of precursors to inflammatory cytokines. This is Kallikrein-7 (Klk7) from Mus musculus (Mouse).